The chain runs to 261 residues: 3-deoxy-manno-octulosonate cytidylyltransferase 1 (261 aa).

It belongs to the KdsB family.

The protein resides in the cytoplasm. It catalyses the reaction 3-deoxy-alpha-D-manno-oct-2-ulosonate + CTP = CMP-3-deoxy-beta-D-manno-octulosonate + diphosphate. The protein operates within nucleotide-sugar biosynthesis; CMP-3-deoxy-D-manno-octulosonate biosynthesis; CMP-3-deoxy-D-manno-octulosonate from 3-deoxy-D-manno-octulosonate and CTP: step 1/1. It functions in the pathway bacterial outer membrane biogenesis; lipopolysaccharide biosynthesis. Functionally, activates KDO (a required 8-carbon sugar) for incorporation into bacterial lipopolysaccharide in Gram-negative bacteria. This chain is 3-deoxy-manno-octulosonate cytidylyltransferase 1, found in Burkholderia lata (strain ATCC 17760 / DSM 23089 / LMG 22485 / NCIMB 9086 / R18194 / 383).